We begin with the raw amino-acid sequence, 337 residues long: Tetraacyldisaccharide 4'-kinase (337 aa).

His51–Thr58 provides a ligand contact to ATP.

Belongs to the LpxK family.

It catalyses the reaction a lipid A disaccharide + ATP = a lipid IVA + ADP + H(+). It functions in the pathway glycolipid biosynthesis; lipid IV(A) biosynthesis; lipid IV(A) from (3R)-3-hydroxytetradecanoyl-[acyl-carrier-protein] and UDP-N-acetyl-alpha-D-glucosamine: step 6/6. Functionally, transfers the gamma-phosphate of ATP to the 4'-position of a tetraacyldisaccharide 1-phosphate intermediate (termed DS-1-P) to form tetraacyldisaccharide 1,4'-bis-phosphate (lipid IVA). This Nitrobacter winogradskyi (strain ATCC 25391 / DSM 10237 / CIP 104748 / NCIMB 11846 / Nb-255) protein is Tetraacyldisaccharide 4'-kinase.